Reading from the N-terminus, the 385-residue chain is Gibberellin 20 oxidase 5 (385 aa).

The Fe2OG dioxygenase domain maps to 224-324; the sequence is DGSGIFRCNY…RRSLVFFSCP (101 aa). Residues His249, Asp251, and His305 each contribute to the Fe cation site. Arg315 is a catalytic residue.

It belongs to the iron/ascorbate-dependent oxidoreductase family. GA20OX subfamily. Fe(2+) serves as cofactor. It depends on L-ascorbate as a cofactor. In terms of tissue distribution, expressed in 3-day-old seedlings and siliques. Detected in dry seeds, roots, old leaves and inflorescences.

The catalysed reaction is gibberellin A12 + 2 2-oxoglutarate + 3 O2 + H(+) = gibberellin A9 + 2 succinate + 3 CO2 + 2 H2O. It catalyses the reaction gibberellin A53 + 2 2-oxoglutarate + 3 O2 + H(+) = gibberellin A20 + 2 succinate + 3 CO2 + 2 H2O. It functions in the pathway plant hormone biosynthesis; gibberellin biosynthesis. In terms of biological role, key oxidase enzyme in the biosynthesis of gibberellin that catalyzes the conversion of GA12 and GA53 to GA9 and GA20 respectively, via a three-step oxidation at C-20 of the GA skeleton. This chain is Gibberellin 20 oxidase 5 (GA20OX5), found in Arabidopsis thaliana (Mouse-ear cress).